The primary structure comprises 154 residues: Myoglobin (154 aa).

The Globin domain maps to 2–148 (GLSDGEWELV…FRNDIAAKYK (147 aa)). S4 is modified (phosphoserine). The residue at position 68 (T68) is a Phosphothreonine. H94 is a binding site for heme b.

Belongs to the globin family. Monomeric.

It is found in the cytoplasm. It localises to the sarcoplasm. The catalysed reaction is Fe(III)-heme b-[protein] + nitric oxide + H2O = Fe(II)-heme b-[protein] + nitrite + 2 H(+). It carries out the reaction H2O2 + AH2 = A + 2 H2O. In terms of biological role, monomeric heme protein which primary function is to store oxygen and facilitate its diffusion within muscle tissues. Reversibly binds oxygen through a pentacoordinated heme iron and enables its timely and efficient release as needed during periods of heightened demand. Depending on the oxidative conditions of tissues and cells, and in addition to its ability to bind oxygen, it also has a nitrite reductase activity whereby it regulates the production of bioactive nitric oxide. Under stress conditions, like hypoxia and anoxia, it also protects cells against reactive oxygen species thanks to its pseudoperoxidase activity. The chain is Myoglobin (MB) from Elephas maximus (Indian elephant).